The primary structure comprises 99 residues: Prostate and testis expressed protein 14 (99 aa).

A signal peptide spans 1–21 (MGKNILLLLLGLSFVIGFLQA). The region spanning 22–99 (LRCLECDMLN…CHDQSLCNEF (78 aa)) is the UPAR/Ly6 domain. Disulfide bonds link cysteine 24–cysteine 51, cysteine 27–cysteine 36, cysteine 43–cysteine 69, cysteine 73–cysteine 89, and cysteine 90–cysteine 96. N-linked (GlcNAc...) asparagine glycosylation occurs at asparagine 40. N-linked (GlcNAc...) asparagine glycosylation is found at asparagine 75 and asparagine 82.

It belongs to the PATE family. In terms of assembly, monomer.

The protein resides in the secreted. The polypeptide is Prostate and testis expressed protein 14 (Rattus norvegicus (Rat)).